The chain runs to 204 residues: Methylthioribulose-1-phosphate dehydratase (204 aa).

Residues His-95 and His-97 each coordinate Zn(2+).

Belongs to the aldolase class II family. MtnB subfamily. It depends on Zn(2+) as a cofactor.

The enzyme catalyses 5-(methylsulfanyl)-D-ribulose 1-phosphate = 5-methylsulfanyl-2,3-dioxopentyl phosphate + H2O. Its pathway is amino-acid biosynthesis; L-methionine biosynthesis via salvage pathway; L-methionine from S-methyl-5-thio-alpha-D-ribose 1-phosphate: step 2/6. In terms of biological role, catalyzes the dehydration of methylthioribulose-1-phosphate (MTRu-1-P) into 2,3-diketo-5-methylthiopentyl-1-phosphate (DK-MTP-1-P). In Parvibaculum lavamentivorans (strain DS-1 / DSM 13023 / NCIMB 13966), this protein is Methylthioribulose-1-phosphate dehydratase.